Here is a 201-residue protein sequence, read N- to C-terminus: Dynactin subunit 6 (201 aa).

Belongs to the dynactin subunits 5/6 family. Dynactin subunit 6 subfamily. As to quaternary structure, member of the pointed-end complex of the dynactin shoulder complex which contains dctn4, dctn5 and dctn6 subunits and Actr10. Within the complex dctn6 forms a heterodimer with dctn5. Interacts with plk1.

It localises to the cytoplasm. The protein resides in the cytoskeleton. It is found in the chromosome. The protein localises to the centromere. Its subcellular location is the kinetochore. Its function is as follows. Part of the dynactin complex that activates the molecular motor dynein for ultra-processive transport along microtubules. This chain is Dynactin subunit 6 (dctn6), found in Xenopus tropicalis (Western clawed frog).